A 98-amino-acid polypeptide reads, in one-letter code: NADH-ubiquinone oxidoreductase chain 4L (98 aa).

3 helical membrane passes run 1 to 21 (MTLI…GLLM), 29 to 49 (ALLC…LTIL), and 61 to 81 (IILL…LVMV).

This sequence belongs to the complex I subunit 4L family. Core subunit of respiratory chain NADH dehydrogenase (Complex I) which is composed of 45 different subunits.

It localises to the mitochondrion inner membrane. The catalysed reaction is a ubiquinone + NADH + 5 H(+)(in) = a ubiquinol + NAD(+) + 4 H(+)(out). Functionally, core subunit of the mitochondrial membrane respiratory chain NADH dehydrogenase (Complex I) which catalyzes electron transfer from NADH through the respiratory chain, using ubiquinone as an electron acceptor. Part of the enzyme membrane arm which is embedded in the lipid bilayer and involved in proton translocation. The polypeptide is NADH-ubiquinone oxidoreductase chain 4L (MT-ND4L) (Balaenoptera physalus (Fin whale)).